We begin with the raw amino-acid sequence, 237 residues long: Urease accessory protein UreF (237 aa).

Belongs to the UreF family. In terms of assembly, ureD, UreF and UreG form a complex that acts as a GTP-hydrolysis-dependent molecular chaperone, activating the urease apoprotein by helping to assemble the nickel containing metallocenter of UreC. The UreE protein probably delivers the nickel.

It localises to the cytoplasm. Required for maturation of urease via the functional incorporation of the urease nickel metallocenter. In Streptococcus salivarius (strain 57.I), this protein is Urease accessory protein UreF.